The chain runs to 118 residues: Small ribosomal subunit protein uS13 (118 aa).

Positions 95-118 (LPVRGQRTRTNARTRKGPKKLINK) are disordered.

It belongs to the universal ribosomal protein uS13 family. In terms of assembly, part of the 30S ribosomal subunit. Forms a loose heterodimer with protein S19. Forms two bridges to the 50S subunit in the 70S ribosome.

Its function is as follows. Located at the top of the head of the 30S subunit, it contacts several helices of the 16S rRNA. In the 70S ribosome it contacts the 23S rRNA (bridge B1a) and protein L5 of the 50S subunit (bridge B1b), connecting the 2 subunits; these bridges are implicated in subunit movement. Contacts the tRNAs in the A and P-sites. The polypeptide is Small ribosomal subunit protein uS13 (Blochmanniella floridana).